We begin with the raw amino-acid sequence, 150 residues long: Nucleoside diphosphate kinase (150 aa).

Lys-10, Phe-58, Arg-86, Thr-92, Arg-103, and Asn-113 together coordinate ATP. His-116 functions as the Pros-phosphohistidine intermediate in the catalytic mechanism.

This sequence belongs to the NDK family. It depends on Mg(2+) as a cofactor.

Its subcellular location is the cytoplasm. It catalyses the reaction a 2'-deoxyribonucleoside 5'-diphosphate + ATP = a 2'-deoxyribonucleoside 5'-triphosphate + ADP. It carries out the reaction a ribonucleoside 5'-diphosphate + ATP = a ribonucleoside 5'-triphosphate + ADP. Its function is as follows. Major role in the synthesis of nucleoside triphosphates other than ATP. The ATP gamma phosphate is transferred to the NDP beta phosphate via a ping-pong mechanism, using a phosphorylated active-site intermediate. This chain is Nucleoside diphosphate kinase, found in Methanobrevibacter smithii (strain ATCC 35061 / DSM 861 / OCM 144 / PS).